Here is a 466-residue protein sequence, read N- to C-terminus: Gamma-aminobutyric acid permease (466 aa).

Topologically, residues 2–20 (GQSSQPHELGGGLKSRHVT) are cytoplasmic. 2 consecutive transmembrane segments (helical) span residues 21-41 (MLSI…VAIA) and 42-62 (EAGP…VMIM). Residues 63–96 (RMLAEMAVATPDTGSFSTYADKAIGRWAGYTIGW) lie on the Cytoplasmic side of the membrane. Residues 97 to 117 (LYWWFWVLVIPLEANIAAMIL) traverse the membrane as a helical segment. A topological domain (periplasmic) is located at residue histidine 118. The helical transmembrane segment at 119-139 (SWVPGIPIWLFSLVITLALTG) threads the bilayer. The Cytoplasmic portion of the chain corresponds to 140–153 (SNLLSVKNYGEFEF). The chain crosses the membrane as a helical span at residues 154–174 (WLALCKVIAILAFIFLGAVAI). Residues 175–199 (SGFYPYAEVSGISRLWDSGGFMPNG) lie on the Periplasmic side of the membrane. The helical transmembrane segment at 200-220 (FGAVLSAMLITMFSFMGAEIV) threads the bilayer. Residues 221–246 (TIAAAESDTPEKHIVRATNSVIWRIS) are Cytoplasmic-facing. The chain crosses the membrane as a helical span at residues 247–267 (IFYLCSIFVVVALIPWNMPGL). Topologically, residues 268 to 286 (KAVGSYRSVLELLNIPHAK) are periplasmic. The helical transmembrane segment at 287–307 (LIMDCVILLSVTSCLNSALYT) threads the bilayer. Residues 308 to 334 (ASRMLYSLSRRGDAPAVMGKINRSKTP) lie on the Cytoplasmic side of the membrane. A helical transmembrane segment spans residues 335–355 (YVAVLLSTGAAFLTVVVNYYA). The Periplasmic segment spans residues 356 to 358 (PAK). The helical transmembrane segment at 359–379 (VFKFLIDSSGAIALLVYLVIA) threads the bilayer. Residues 380 to 402 (VSQLRMRKILRAEGSEIRLRMWL) are Cytoplasmic-facing. A helical membrane pass occupies residues 403–423 (YPWLTWLVIGFITFVLVVMLF). Residues 424-428 (RPAQQ) are Periplasmic-facing. A helical transmembrane segment spans residues 429–449 (LEVISTGLLAIGIICTVPIMA). Residues 450-466 (RWKKLVLWQKTPVHNTR) are Cytoplasmic-facing.

This sequence belongs to the amino acid-polyamine-organocation (APC) superfamily. Amino acid transporter (AAT) (TC 2.A.3.1) family. In terms of assembly, monomer.

Its subcellular location is the cell inner membrane. The catalysed reaction is 4-aminobutanoate(in) + H(+)(in) = 4-aminobutanoate(out) + H(+)(out). The protein operates within amino-acid degradation; 4-aminobutanoate degradation. Its activity is regulated as follows. Uptake is stimulated by ammonium sulfate and abolished by 2,4-dinitrophenol. Is affected both topologically and kinetically by phospholipid composition of the membrane. In cells lacking phosphatidylethanolamine (PE), the N-terminal hairpin is inverted relative to the membrane and the rate of GABA transport is reduced by more than 99%. Functionally, transporter for gamma-aminobutyrate (GABA). Transport is driven by the membrane potential. Can also transport a number of GABA analogs such as nipecotic acid or muscimol. In Escherichia coli (strain K12), this protein is Gamma-aminobutyric acid permease.